The sequence spans 138 residues: Cysteine desulfuration protein SufE (138 aa).

Cysteine 51 serves as the catalytic Cysteine persulfide intermediate.

It belongs to the SufE family. Homodimer. Interacts with SufS.

The protein localises to the cytoplasm. It functions in the pathway cofactor biosynthesis; iron-sulfur cluster biosynthesis. In terms of biological role, participates in cysteine desulfuration mediated by SufS. Cysteine desulfuration mobilizes sulfur from L-cysteine to yield L-alanine and constitutes an essential step in sulfur metabolism for biosynthesis of a variety of sulfur-containing biomolecules. Functions as a sulfur acceptor for SufS, by mediating the direct transfer of the sulfur atom from the S-sulfanylcysteine of SufS, an intermediate product of cysteine desulfuration process. In Sodalis glossinidius (strain morsitans), this protein is Cysteine desulfuration protein SufE.